The chain runs to 142 residues: Small heat shock protein IbpB (142 aa).

A sHSP domain is found at 26–137 (AGESQSFPPY…APQRIAISER (112 aa)).

The protein belongs to the small heat shock protein (HSP20) family. As to quaternary structure, homodimer. Forms homomultimers of about 100-150 subunits at optimal growth temperatures. Conformation changes to oligomers at high temperatures or high ionic concentrations. The decrease in size of the multimers is accompanied by an increase in chaperone activity.

It is found in the cytoplasm. Associates with aggregated proteins, together with IbpA, to stabilize and protect them from irreversible denaturation and extensive proteolysis during heat shock and oxidative stress. Aggregated proteins bound to the IbpAB complex are more efficiently refolded and reactivated by the ATP-dependent chaperone systems ClpB and DnaK/DnaJ/GrpE. Its activity is ATP-independent. In Klebsiella pneumoniae subsp. pneumoniae (strain ATCC 700721 / MGH 78578), this protein is Small heat shock protein IbpB.